The sequence spans 434 residues: Enolase 2 (434 aa).

Residue glutamine 171 coordinates (2R)-2-phosphoglycerate. Residue glutamate 213 is the Proton donor of the active site. Mg(2+) is bound by residues aspartate 250, glutamate 293, and aspartate 320. Lysine 345, arginine 374, serine 375, and lysine 396 together coordinate (2R)-2-phosphoglycerate. The active-site Proton acceptor is lysine 345.

Belongs to the enolase family. Mg(2+) serves as cofactor.

Its subcellular location is the cytoplasm. The protein localises to the secreted. It localises to the cell surface. It carries out the reaction (2R)-2-phosphoglycerate = phosphoenolpyruvate + H2O. Its pathway is carbohydrate degradation; glycolysis; pyruvate from D-glyceraldehyde 3-phosphate: step 4/5. Its function is as follows. Catalyzes the reversible conversion of 2-phosphoglycerate (2-PG) into phosphoenolpyruvate (PEP). It is essential for the degradation of carbohydrates via glycolysis. The protein is Enolase 2 of Streptomyces coelicolor (strain ATCC BAA-471 / A3(2) / M145).